The primary structure comprises 372 residues: High-affinity lysophosphatidic acid receptor (372 aa).

Residues 1–38 (MGCNNTALDNCMLPNLSIATAPLDLRFAFSTPLRMLLA) lie on the Extracellular side of the membrane. Residues Asn4 and Asn15 are each glycosylated (N-linked (GlcNAc...) asparagine). The chain crosses the membrane as a helical span at residues 39 to 59 (IIMILMIAIAFLGNAIVCLIV). Over 60–80 (YQKPAMRSAINLLLATLAFSD) the chain is Cytoplasmic. A helical membrane pass occupies residues 81–101 (IMLSLFCMPFTAVTIITGSWL). At 102-108 (FGTQFCQ) the chain is on the extracellular side. A helical membrane pass occupies residues 109-129 (ISAMLYWFFVLEGVAILLIIS). Residues 130–149 (VDRFLIIVQRQDKLNPHRAK) lie on the Cytoplasmic side of the membrane. Residues 150–170 (IMIAASWVLSFCISLPSVVGW) traverse the membrane as a helical segment. Residues 171 to 198 (TLVEVPTRAPQCVLGYTEFSADRVYAVM) lie on the Extracellular side of the membrane. The helical transmembrane segment at 199 to 219 (LIVAVFFIPFSVMLYSYLCIL) threads the bilayer. Over 220–268 (NTVRRNAVRIHTHADSLCLSQVSKLGLMGLQRPHQMNVDMSFKTRAFTT) the chain is Cytoplasmic. A helical membrane pass occupies residues 269 to 289 (ILILFIGFSLCWLPHSVFSLL). Over 290–301 (SVFSRTFYYSSS) the chain is Extracellular. Residues 302–324 (FYSISTCTLWLTYLKSVFNPVIY) traverse the membrane as a helical segment. Residues 325-372 (CWRIKKFREACLEFMPKTFKILPNVRGRTRRRIRPSTIYVCGEHQSAV) are Cytoplasmic-facing.

This sequence belongs to the G-protein coupled receptor 1 family. Ubiquitously expressed.

It is found in the cell membrane. Highly selective receptor for lysophosphatidic acid (LPA), a mediator of diverse cellular activities. The chain is High-affinity lysophosphatidic acid receptor from Xenopus laevis (African clawed frog).